The following is a 307-amino-acid chain: Golgi to ER traffic protein 2 (307 aa).

Topologically, residues 1-173 (MSDSTDSPAV…QAYDTYQQKL (173 aa)) are cytoplasmic. A compositionally biased stretch (polar residues) spans 41 to 52 (LSQGSSVKTTGV). Positions 41–73 (LSQGSSVKTTGVKSVLDEPQPTATSSAIHDEDP) are disordered. A helical transmembrane segment spans residues 174–194 (WKSRFLVIRVVVTLFNFFYHY). The Lumenal portion of the chain corresponds to 195–220 (LNVPSFHASNYSYVRDLAQDEFPVRN). The chain crosses the membrane as a helical span at residues 221-240 (FFTWFAAFEVIIVLQYYTVF). At 241-284 (HKLGLFHAANQNSMIMKLMSMGSMVLPQLNTYQPLVARFLGYYE) the chain is on the cytoplasmic side. A helical transmembrane segment spans residues 285–305 (LFGIIFGDLSLVIVLFGLLSF). Topologically, residues 306–307 (TK) are lumenal.

Belongs to the GET2 family. Component of the Golgi to ER traffic (GET) complex, which is composed of GET1, GET2 and GET3. Within the complex, GET1 and GET2 form a heterotetramer which is stabilized by phosphatidylinositol binding and which binds to the GET3 homodimer.

The protein localises to the endoplasmic reticulum membrane. Its subcellular location is the golgi apparatus membrane. Its function is as follows. Required for the post-translational delivery of tail-anchored (TA) proteins to the endoplasmic reticulum. Together with GET1, acts as a membrane receptor for soluble GET3, which recognizes and selectively binds the transmembrane domain of TA proteins in the cytosol. The GET complex cooperates with the HDEL receptor ERD2 to mediate the ATP-dependent retrieval of resident ER proteins that contain a C-terminal H-D-E-L retention signal from the Golgi to the ER. This chain is Golgi to ER traffic protein 2, found in Candida tropicalis (strain ATCC MYA-3404 / T1) (Yeast).